Reading from the N-terminus, the 316-residue chain is MVLQELRDSNSSKFQVSEFILMGFPGIHSWQHWLSLPLALLYLLALSANILILIIINKEAALHQPMYYFLGILAMADIGLATTIMPKILAILWFNAKTISLLECFAQMYAIHCFVAMESSTFVCMAIDRYVAICRPLRYPSIITESFVFKANGFMALRNSLCLISVPLLAAQRHYCSQNQIEHCLCSNLGVTSLSCDDRRINSINQVLLAWTLMGSDLGLIILSYALILYSVLKLNSPEAASKALSTCTSHLILILFFYTVIIVISITRSTGMRVPLIPVLLNVLHNVIPPALNPMVYALKNKELRQGLYKVLRLE.

The Extracellular portion of the chain corresponds to 1–32; the sequence is MVLQELRDSNSSKFQVSEFILMGFPGIHSWQH. N-linked (GlcNAc...) asparagine glycosylation occurs at Asn-10. A helical membrane pass occupies residues 33–53; that stretch reads WLSLPLALLYLLALSANILIL. The Cytoplasmic segment spans residues 54–61; it reads IIINKEAA. A helical membrane pass occupies residues 62 to 82; it reads LHQPMYYFLGILAMADIGLAT. Over 83–106 the chain is Extracellular; it reads TIMPKILAILWFNAKTISLLECFA. A disulfide bond links Cys-104 and Cys-196. Residues 107 to 127 form a helical membrane-spanning segment; the sequence is QMYAIHCFVAMESSTFVCMAI. Residues 128–146 are Cytoplasmic-facing; it reads DRYVAICRPLRYPSIITES. The chain crosses the membrane as a helical span at residues 147-167; the sequence is FVFKANGFMALRNSLCLISVP. Residues 168–203 lie on the Extracellular side of the membrane; the sequence is LLAAQRHYCSQNQIEHCLCSNLGVTSLSCDDRRINS. A helical membrane pass occupies residues 204-224; that stretch reads INQVLLAWTLMGSDLGLIILS. The Cytoplasmic segment spans residues 225-244; the sequence is YALILYSVLKLNSPEAASKA. The chain crosses the membrane as a helical span at residues 245–265; sequence LSTCTSHLILILFFYTVIIVI. The Extracellular portion of the chain corresponds to 266 to 279; that stretch reads SITRSTGMRVPLIP. A helical membrane pass occupies residues 280–300; the sequence is VLLNVLHNVIPPALNPMVYAL. Topologically, residues 301 to 316 are cytoplasmic; the sequence is KNKELRQGLYKVLRLE.

The protein belongs to the G-protein coupled receptor 1 family.

It localises to the cell membrane. Odorant receptor. The polypeptide is Olfactory receptor 56B2 (Homo sapiens (Human)).